The sequence spans 216 residues: Adenylate kinase (216 aa).

10–15 (GAGKGT) is a binding site for ATP. The segment at 30–59 (STGDMLRAAVKAETPVGLKAKAVMEAGQLV) is NMP. AMP is bound by residues T31, R36, 57 to 59 (QLV), 85 to 88 (GYPR), and Q92. An LID region spans residues 126 to 164 (GRYTCATCGKGYHDKFEKPAVEGTCDKCGGHEFKRRPDD). R127 contacts ATP. Positions 130, 133, 150, and 153 each coordinate Zn(2+). The AMP site is built by R161 and R172. A200 lines the ATP pocket.

It belongs to the adenylate kinase family. In terms of assembly, monomer.

The protein localises to the cytoplasm. The enzyme catalyses AMP + ATP = 2 ADP. It functions in the pathway purine metabolism; AMP biosynthesis via salvage pathway; AMP from ADP: step 1/1. Functionally, catalyzes the reversible transfer of the terminal phosphate group between ATP and AMP. Plays an important role in cellular energy homeostasis and in adenine nucleotide metabolism. This Novosphingobium aromaticivorans (strain ATCC 700278 / DSM 12444 / CCUG 56034 / CIP 105152 / NBRC 16084 / F199) protein is Adenylate kinase.